Here is a 217-residue protein sequence, read N- to C-terminus: Ribose-5-phosphate isomerase A (217 aa).

Residues Thr-28–Thr-31, Asp-81–Asp-84, and Lys-94–Gly-97 each bind substrate. The active-site Proton acceptor is the Glu-103. Lys-121 lines the substrate pocket.

The protein belongs to the ribose 5-phosphate isomerase family. Homodimer.

The catalysed reaction is aldehydo-D-ribose 5-phosphate = D-ribulose 5-phosphate. It participates in carbohydrate degradation; pentose phosphate pathway; D-ribose 5-phosphate from D-ribulose 5-phosphate (non-oxidative stage): step 1/1. Its function is as follows. Catalyzes the reversible conversion of ribose-5-phosphate to ribulose 5-phosphate. The chain is Ribose-5-phosphate isomerase A from Aeromonas salmonicida (strain A449).